The primary structure comprises 359 residues: Guanine nucleotide-binding protein alpha-4 subunit (359 aa).

Glycine 2 carries N-myristoyl glycine lipidation. A lipid anchor (S-palmitoyl cysteine) is attached at cysteine 3. A G-alpha domain is found at 31–359; sequence TEVKLLLLGA…RYNLKDCGLF (329 aa). The tract at residues 34 to 47 is G1 motif; that stretch reads KLLLLGAGESGKST. Residues 39–46, 178–184, 203–207, 272–275, and alanine 331 contribute to the GTP site; these read GAGESGKS, LRARVKS, DVGGQ, and NKMD. Serine 46 is a binding site for Mg(2+). Residues 176 to 184 are G2 motif; the sequence is DILRARVKS. Residues 199 to 208 form a G3 motif region; the sequence is FRMFDVGGQR. Positions 268 to 275 are G4 motif; that stretch reads ILFLNKMD. Residues 329–334 are G5 motif; it reads TCATDT.

Belongs to the G-alpha family. G(i/o/t/z) subfamily. G proteins are composed of 3 units; alpha, beta and gamma. The alpha chain contains the guanine nucleotide binding site.

Guanine nucleotide-binding proteins (G proteins) are involved as modulators or transducers in various transmembrane signaling systems. This Caenorhabditis briggsae protein is Guanine nucleotide-binding protein alpha-4 subunit (gpa-4).